Reading from the N-terminus, the 131-residue chain is Small ribosomal subunit protein uS8 (131 aa).

It belongs to the universal ribosomal protein uS8 family. Part of the 30S ribosomal subunit. Contacts proteins S5 and S12.

Functionally, one of the primary rRNA binding proteins, it binds directly to 16S rRNA central domain where it helps coordinate assembly of the platform of the 30S subunit. The chain is Small ribosomal subunit protein uS8 from Burkholderia ambifaria (strain MC40-6).